The primary structure comprises 200 residues: Large ribosomal subunit protein uL4 (200 aa).

Residues Thr-42–Gly-65 are disordered.

The protein belongs to the universal ribosomal protein uL4 family. Part of the 50S ribosomal subunit.

Its function is as follows. One of the primary rRNA binding proteins, this protein initially binds near the 5'-end of the 23S rRNA. It is important during the early stages of 50S assembly. It makes multiple contacts with different domains of the 23S rRNA in the assembled 50S subunit and ribosome. In terms of biological role, forms part of the polypeptide exit tunnel. This is Large ribosomal subunit protein uL4 from Vibrio cholerae serotype O1 (strain ATCC 39541 / Classical Ogawa 395 / O395).